The primary structure comprises 164 residues: Ribosome-binding factor A (164 aa).

Belongs to the RbfA family. Monomer. Binds 30S ribosomal subunits, but not 50S ribosomal subunits or 70S ribosomes.

It is found in the cytoplasm. Its function is as follows. One of several proteins that assist in the late maturation steps of the functional core of the 30S ribosomal subunit. Associates with free 30S ribosomal subunits (but not with 30S subunits that are part of 70S ribosomes or polysomes). Required for efficient processing of 16S rRNA. May interact with the 5'-terminal helix region of 16S rRNA. The sequence is that of Ribosome-binding factor A from Mycobacterium leprae (strain Br4923).